The following is a 417-amino-acid chain: Actin-related protein 10 (417 aa).

This sequence belongs to the actin family. In terms of assembly, subunit of dynactin, a multiprotein complex part of a tripartite complex with dynein and a adapter, such as BICDL1, BICD2 or HOOK3. The dynactin complex is built around ACTR1A/ACTB filament and consists of an actin-related filament composed of a shoulder domain, a pointed end and a barbed end. Its length is defined by its flexible shoulder domain. The soulder is composed of 2 DCTN1 subunits, 4 DCTN2 and 2 DCTN3. The 4 DCNT2 (via N-terminus) bind the ACTR1A filament and act as molecular rulers to determine the length. The pointed end is important for binding dynein-dynactin cargo adapters. Consists of 4 subunits: ACTR10, DCNT4, DCTN5 and DCTN6. The barbed end is composed of a CAPZA1:CAPZB heterodimers, which binds ACTR1A/ACTB filament and dynactin and stabilizes dynactin.

The protein resides in the cytoplasm. It is found in the cytoskeleton. In terms of biological role, part of the dynactin complex that activates the molecular motor dynein for ultra-processive transport along microtubules. The protein is Actin-related protein 10 (ACTR10) of Sus scrofa (Pig).